The primary structure comprises 527 residues: UDP-glucuronosyltransferase 2A1 (527 aa).

The N-terminal stretch at 1–20 is a signal peptide; the sequence is MLKNILLWSLQLSLLGMSLG. Over 21–490 the chain is Extracellular; sequence GNVLIWPMEG…LSWFQYHSLD (470 aa). N-linked (GlcNAc...) asparagine glycosylation occurs at N49. K134 is subject to N6-succinyllysine. N313 carries an N-linked (GlcNAc...) asparagine glycan. Residues 491 to 507 form a helical membrane-spanning segment; that stretch reads VIGFLLACMASAILLVI. The Cytoplasmic portion of the chain corresponds to 508–527; it reads KCCLFVFQKIGKTXKKNKRD.

It belongs to the UDP-glycosyltransferase family. Olfactory epithelium. Mainly found in the sustentacular cells and to a lesser extent in Bowman's gland cells. Also expressed in the olfactory sensory neuron nuclei. Neuronal localization within the olfactory bulb is mainly found in the deeper granular cells.

Its subcellular location is the membrane. It catalyses the reaction glucuronate acceptor + UDP-alpha-D-glucuronate = acceptor beta-D-glucuronoside + UDP + H(+). It carries out the reaction 16beta,17beta-estriol + UDP-alpha-D-glucuronate = 16beta,17beta-estriol 16-O-(beta-D-glucuronate) + UDP + H(+). The catalysed reaction is 16alpha,17alpha-estriol + UDP-alpha-D-glucuronate = 16alpha,17alpha-estriol 16-O-(beta-D-glucuronate) + UDP + H(+). The enzyme catalyses 17alpha-estradiol + UDP-alpha-D-glucuronate = 17alpha-estradiol 17-O-(beta-D-glucuronate) + UDP + H(+). It catalyses the reaction 17alpha-estradiol + UDP-alpha-D-glucuronate = 17alpha-estradiol 3-O-(beta-D-glucuronate) + UDP + H(+). It carries out the reaction 17beta-estradiol + UDP-alpha-D-glucuronate = 17beta-estradiol 3-O-(beta-D-glucuronate) + UDP + H(+). The catalysed reaction is 17beta-estradiol + UDP-alpha-D-glucuronate = 17beta-estradiol 17-O-(beta-D-glucuronate) + UDP + H(+). The enzyme catalyses testosterone + UDP-alpha-D-glucuronate = testosterone 17-O-(beta-D-glucuronate) + UDP + H(+). It catalyses the reaction epitestosterone + UDP-alpha-D-glucuronate = epitestosterone 17-O-(beta-D-glucuronate) + UDP + H(+). It carries out the reaction lithocholate + UDP-alpha-D-glucuronate = lithocholoyl-3-O-(beta-D-glucuronate) + UDP + H(+). The catalysed reaction is lithocholate + UDP-alpha-D-glucuronate = lithocholoyl-24-O-(beta-D-glucuronate) + UDP. The enzyme catalyses deoxycholate + UDP-alpha-D-glucuronate = deoxycholoyl-24-O-(beta-D-glucuronate) + UDP. It catalyses the reaction hyodeoxycholate + UDP-alpha-D-glucuronate = hyodeoxycholate 6-O-(beta-D-glucuronate) + UDP + H(+). It carries out the reaction hyocholate + UDP-alpha-D-glucuronate = hyocholoyl-24-O-(beta-D-glucuronate) + UDP. In terms of biological role, UDP-glucuronosyltransferase (UGT) that catalyzes phase II biotransformation reactions in which lipophilic substrates are conjugated with glucuronic acid to increase the metabolite's water solubility, thereby facilitating excretion into either the urine or bile. Essential for the elimination and detoxification of drugs, xenobiotics and endogenous compounds. Catalyzes the glucuronidation of endogenous steroid hormones such as androgens (testosterones) and estrogens (estradiol and estriol). Contributes to bile acid (BA) detoxification by catalyzing the glucuronidation of BA substrates, which are natural detergents for dietary lipids absorption. Shows a high affinity to aliphatic odorants such as citronellol as well as olfactory tissue specificity, and therefore may be involved in olfaction. The protein is UDP-glucuronosyltransferase 2A1 of Rattus norvegicus (Rat).